The chain runs to 542 residues: Aspartate kinase FUB3 (542 aa).

2 ACT domains span residues 404–472 (ILSN…VLPD) and 478–542 (LVGA…KSAI).

It belongs to the aspartokinase family.

The enzyme catalyses L-aspartate + ATP = 4-phospho-L-aspartate + ADP. It functions in the pathway mycotoxin biosynthesis. In terms of biological role, aspartate kinase; part of the gene cluster that mediates the biosynthesis of fusaric acid, a mycotoxin with low to moderate toxicity to animals and humans, but with high phytotoxic properties. L-aspartate is suggested as fusaric acid amino acid precursor that is activated and further processed to O-acetyl-L-homoserine by cluster enzymes aspartate kinase FUB3 and homoserine O-acetyltransferase FUB5, as well as enzymes of the primary metabolism. The polyketide synthase (PKS) FUB1 generates the triketide trans-2-hexenal which is presumptively released by the hydrolase FUB4 and linked to the NRPS-bound amino acid precursor by NAD(P)-dependent dehydrogenase FUB6. FUB1, FUB4, and the non-canonical NRPS Fub8 may form an enzyme complex. Further processing of the NRPS-bound intermediate might be carried out by FUB6 and the sulfhydrylase FUB7, enabling a spontaneous electrocyclization to close the carbon backbone of fusaric acid. Dihydrofusaric acid is likely to be released via reduction by the thioester reductase (TR) domain of FUB8 whereupon the final oxidation to fusaric acid may (also) be performed by the FMN-dependent dehydrogenase FUB9. The sequence is that of Aspartate kinase FUB3 from Fusarium oxysporum f. sp. lycopersici (strain 4287 / CBS 123668 / FGSC 9935 / NRRL 34936) (Fusarium vascular wilt of tomato).